We begin with the raw amino-acid sequence, 231 residues long: Orotate phosphoribosyltransferase (231 aa).

K29 is a 5-phospho-alpha-D-ribose 1-diphosphate binding site. 37–38 (FF) contacts orotate. 5-phospho-alpha-D-ribose 1-diphosphate-binding positions include 75–76 (YK), R107, K108, K111, H113, and 133–141 (DDVISRCTA). Orotate is bound by residues S137 and R165.

The protein belongs to the purine/pyrimidine phosphoribosyltransferase family. PyrE subfamily. As to quaternary structure, homodimer.

The enzyme catalyses orotidine 5'-phosphate + diphosphate = orotate + 5-phospho-alpha-D-ribose 1-diphosphate. The protein operates within pyrimidine metabolism; UMP biosynthesis via de novo pathway; UMP from orotate: step 1/2. Functionally, catalyzes the transfer of a ribosyl phosphate group from 5-phosphoribose 1-diphosphate to orotate, leading to the formation of orotidine monophosphate (OMP). This is Orotate phosphoribosyltransferase (URA5) from Podospora anserina (Pleurage anserina).